Consider the following 73-residue polypeptide: Gas vesicle protein A (73 aa).

The protein belongs to the gas vesicle GvpA family. As to quaternary structure, the gas vesicle shell is 2 nm thick and consists of a single layer of this protein. It forms helical ribs nearly perpendicular to the long axis of the vesicle.

The protein localises to the gas vesicle shell. Gas vesicles are hollow, gas filled proteinaceous nanostructures found in some microorganisms. During planktonic growth they allow positioning of the organism at a favorable depth for light or nutrient acquisition. GvpA forms the protein shell. This Nostoc punctiforme (strain ATCC 29133 / PCC 73102) protein is Gas vesicle protein A.